The chain runs to 259 residues: Global transcriptional regulator CodY (259 aa).

Positions 1-155 (MNLLAKTRKL…GATVVGMEIL (155 aa)) are GAF domain. The segment at residues 203 to 222 (ASKIADRVGITRSVIVNALR) is a DNA-binding region (H-T-H motif).

It belongs to the CodY family.

It localises to the cytoplasm. Functionally, DNA-binding global transcriptional regulator which is involved in the adaptive response to starvation and acts by directly or indirectly controlling the expression of numerous genes in response to nutrient availability. During rapid exponential growth, CodY is highly active and represses genes whose products allow adaptation to nutrient depletion. This Exiguobacterium sibiricum (strain DSM 17290 / CCUG 55495 / CIP 109462 / JCM 13490 / 255-15) protein is Global transcriptional regulator CodY.